Reading from the N-terminus, the 488-residue chain is N-succinylglutamate 5-semialdehyde dehydrogenase (488 aa).

221-226 (GSSRTG) serves as a coordination point for NAD(+). Residues Glu244 and Cys278 contribute to the active site.

It belongs to the aldehyde dehydrogenase family. AstD subfamily.

It carries out the reaction N-succinyl-L-glutamate 5-semialdehyde + NAD(+) + H2O = N-succinyl-L-glutamate + NADH + 2 H(+). Its pathway is amino-acid degradation; L-arginine degradation via AST pathway; L-glutamate and succinate from L-arginine: step 4/5. Catalyzes the NAD-dependent reduction of succinylglutamate semialdehyde into succinylglutamate. The chain is N-succinylglutamate 5-semialdehyde dehydrogenase from Pseudomonas fluorescens (strain SBW25).